The sequence spans 289 residues: WUSCHEL-related homeobox 1 (289 aa).

Low complexity predominate over residues 1–11; sequence MDHMQQQQRQQ. The disordered stretch occupies residues 1 to 34; it reads MDHMQQQQRQQVGGGGGEEVAGRGGVPVCRPSGT. Gly residues predominate over residues 12–25; that stretch reads VGGGGGEEVAGRGG. Residues 31–96 constitute a DNA-binding region (homeobox; WUS-type); it reads PSGTRWTPTT…NHKARERQKK (66 aa).

Belongs to the WUS homeobox family. As to quaternary structure, interacts with TPR1, TPR2 and TPR3. In terms of tissue distribution, expressed in young leaf primordia. Expressed in branch an floral meristems. Transiently expressed in the shoot apex.

The protein localises to the nucleus. In terms of biological role, transcription repressor required for the formation and development of tiller buds and panicles. Required for tiller formation and female sterility. Required for the early developmental stages of axillary meristem formation. Plays a role in maintaining the axillary premeristem zone and in promoting the formation of the axillary meristem by promoting OSH1 expression. Does not seem to be involved in maintenance of the shoot apical meristem (SAM). This chain is WUSCHEL-related homeobox 1, found in Oryza sativa subsp. japonica (Rice).